A 301-amino-acid chain; its full sequence is Ribonuclease Z (301 aa).

The Zn(2+) site is built by histidine 63, histidine 65, aspartate 67, histidine 68, histidine 141, aspartate 204, and histidine 262. Aspartate 67 functions as the Proton acceptor in the catalytic mechanism.

Belongs to the RNase Z family. Homodimer. Zn(2+) serves as cofactor.

The enzyme catalyses Endonucleolytic cleavage of RNA, removing extra 3' nucleotides from tRNA precursor, generating 3' termini of tRNAs. A 3'-hydroxy group is left at the tRNA terminus and a 5'-phosphoryl group is left at the trailer molecule.. In terms of biological role, zinc phosphodiesterase, which displays some tRNA 3'-processing endonuclease activity. Probably involved in tRNA maturation, by removing a 3'-trailer from precursor tRNA. The protein is Ribonuclease Z of Streptomyces avermitilis (strain ATCC 31267 / DSM 46492 / JCM 5070 / NBRC 14893 / NCIMB 12804 / NRRL 8165 / MA-4680).